The following is a 62-amino-acid chain: Large ribosomal subunit protein bL28 (62 aa).

The disordered stretch occupies residues 1–22 (MAKKCAISGKGPMSGNNVSHAK).

This sequence belongs to the bacterial ribosomal protein bL28 family.

The polypeptide is Large ribosomal subunit protein bL28 (Sulfurimonas denitrificans (strain ATCC 33889 / DSM 1251) (Thiomicrospira denitrificans (strain ATCC 33889 / DSM 1251))).